The sequence spans 123 residues: Crossover junction endodeoxyribonuclease Hjc (123 aa).

Glu9 contributes to the Mg(2+) binding site. Residue Ser29 is part of the active site. Asp33 and Glu46 together coordinate Mg(2+).

It belongs to the Holliday junction resolvase Hjc family. Homodimer. Probably interacts with PCNA and RadB. It depends on Mg(2+) as a cofactor. The cofactor is Mn(2+).

It catalyses the reaction Endonucleolytic cleavage at a junction such as a reciprocal single-stranded crossover between two homologous DNA duplexes (Holliday junction).. Cleavage inhibited by RadB in the absence (but not presence) of ATP. A structure-specific endonuclease that resolves Holliday junction (HJ) intermediates during genetic recombination. Cleaves 4-way DNA junctions introducing paired nicks in opposing strands, leaving a 5'-terminal phosphate and a 3'-terminal hydroxyl group that are subsequently ligated to produce recombinant products. Cleaves both mobile and immobile junctions. Binds 4-way junction DNA, a synthetic Hj, binding is not competed by dsDNA. This Pyrococcus furiosus (strain ATCC 43587 / DSM 3638 / JCM 8422 / Vc1) protein is Crossover junction endodeoxyribonuclease Hjc.